We begin with the raw amino-acid sequence, 243 residues long: Probable septum site-determining protein MinC (243 aa).

This sequence belongs to the MinC family. As to quaternary structure, interacts with MinD and FtsZ.

Functionally, cell division inhibitor that blocks the formation of polar Z ring septums. Rapidly oscillates between the poles of the cell to destabilize FtsZ filaments that have formed before they mature into polar Z rings. Prevents FtsZ polymerization. In Agathobacter rectalis (strain ATCC 33656 / DSM 3377 / JCM 17463 / KCTC 5835 / VPI 0990) (Eubacterium rectale), this protein is Probable septum site-determining protein MinC.